The chain runs to 422 residues: 5'-deoxyadenosine deaminase (422 aa).

H57 and H59 together coordinate Zn(2+). Positions 86 and 178 each coordinate substrate. H205 is a binding site for Zn(2+). Substrate-binding residues include E208 and D294. Residue D294 participates in Zn(2+) binding.

Belongs to the metallo-dependent hydrolases superfamily. MTA/SAH deaminase family. As to quaternary structure, homotetramer. It depends on Zn(2+) as a cofactor.

The enzyme catalyses 5'-deoxyadenosine + H2O + H(+) = 5'-deoxyinosine + NH4(+). It carries out the reaction S-adenosyl-L-homocysteine + H2O + H(+) = S-inosyl-L-homocysteine + NH4(+). The catalysed reaction is S-methyl-5'-thioadenosine + H2O + H(+) = S-methyl-5'-thioinosine + NH4(+). It catalyses the reaction adenosine + H2O + H(+) = inosine + NH4(+). Its pathway is amino-acid biosynthesis; S-adenosyl-L-methionine biosynthesis. In terms of biological role, catalyzes the deamination of three SAM-derived enzymatic products, namely 5'-deoxyadenosine, S-adenosyl-L-homocysteine, and 5'-methylthioadenosine, to produce the inosine analogs. Can also deaminate adenosine. The preferred substrate for this enzyme is 5'-deoxyadenosine, but all these substrates are efficiently deaminated. Likely functions in a S-adenosyl-L-methionine (SAM) recycling pathway from S-adenosyl-L-homocysteine (SAH) produced from SAM-dependent methylation reactions. May also be involved in the recycling of 5'-deoxyadenosine, whereupon the 5'-deoxyribose moiety of 5'-deoxyinosine is further metabolized to deoxyhexoses used for the biosynthesis of aromatic amino acids in methanogens. This is 5'-deoxyadenosine deaminase from Methanococcus maripaludis (strain C7 / ATCC BAA-1331).